The primary structure comprises 249 residues: RING finger protein 223 (249 aa).

The disordered stretch occupies residues 1-44; sequence MSSGQQVWHTAVPPPRRSSSIASMPRSPSSAGSPRSPGTPGSER. Residues 17–44 show a composition bias toward low complexity; it reads RSSSIASMPRSPSSAGSPRSPGTPGSER. The RING-type zinc-finger motif lies at 51 to 102; the sequence is CSICFSGYDNIFKTPKELSCTHVFCLECLARLAAAQPVGRPGGEAVPCPFCR. Residues 199–219 form a helical membrane-spanning segment; it reads LVSALLLMLFCVALWPVQCAL. The tract at residues 230 to 249 is disordered; that stretch reads PPRPPATSTAASPLGPLTDN. Low complexity predominate over residues 235 to 249; that stretch reads ATSTAASPLGPLTDN.

It is found in the membrane. This Homo sapiens (Human) protein is RING finger protein 223 (RNF223).